The chain runs to 294 residues: Glycine--tRNA ligase alpha subunit (294 aa).

This sequence belongs to the class-II aminoacyl-tRNA synthetase family. In terms of assembly, tetramer of two alpha and two beta subunits.

The protein resides in the cytoplasm. The catalysed reaction is tRNA(Gly) + glycine + ATP = glycyl-tRNA(Gly) + AMP + diphosphate. The chain is Glycine--tRNA ligase alpha subunit from Nostoc sp. (strain PCC 7120 / SAG 25.82 / UTEX 2576).